Consider the following 433-residue polypeptide: Histidinol dehydrogenase (433 aa).

The substrate site is built by S236, Q258, and H261. 2 residues coordinate Zn(2+): Q258 and H261. Active-site proton acceptor residues include E325 and H326. Residues H326, D359, E413, and H418 each coordinate substrate. D359 serves as a coordination point for Zn(2+). Position 418 (H418) interacts with Zn(2+).

The protein belongs to the histidinol dehydrogenase family. Requires Zn(2+) as cofactor.

The catalysed reaction is L-histidinol + 2 NAD(+) + H2O = L-histidine + 2 NADH + 3 H(+). The protein operates within amino-acid biosynthesis; L-histidine biosynthesis; L-histidine from 5-phospho-alpha-D-ribose 1-diphosphate: step 9/9. Catalyzes the sequential NAD-dependent oxidations of L-histidinol to L-histidinaldehyde and then to L-histidine. The protein is Histidinol dehydrogenase of Pseudoalteromonas translucida (strain TAC 125).